Consider the following 264-residue polypeptide: Potassium channel regulatory protein (264 aa).

Residues 5-74 enclose the BTB domain; the sequence is DLVTLNVGGR…LRNHELLLPS (70 aa).

Can form homooligomers. Interacts with KCNA1 (via cytoplasmic N-terminal domain) and KCNA4.

Its subcellular location is the endoplasmic reticulum. Functionally, inhibits potassium fluxes in cells. May regulate Kv1 family channel proteins by retaining a fraction of channels in endomembranes. The protein is Potassium channel regulatory protein (Kcnrg) of Mus musculus (Mouse).